The chain runs to 401 residues: Nicotinate phosphoribosyltransferase (401 aa).

His221 bears the Phosphohistidine; by autocatalysis mark.

This sequence belongs to the NAPRTase family. Post-translationally, transiently phosphorylated on a His residue during the reaction cycle. Phosphorylation strongly increases the affinity for substrates and increases the rate of nicotinate D-ribonucleotide production. Dephosphorylation regenerates the low-affinity form of the enzyme, leading to product release.

It catalyses the reaction nicotinate + 5-phospho-alpha-D-ribose 1-diphosphate + ATP + H2O = nicotinate beta-D-ribonucleotide + ADP + phosphate + diphosphate. It functions in the pathway cofactor biosynthesis; NAD(+) biosynthesis; nicotinate D-ribonucleotide from nicotinate: step 1/1. Catalyzes the synthesis of beta-nicotinate D-ribonucleotide from nicotinate and 5-phospho-D-ribose 1-phosphate at the expense of ATP. This Edwardsiella ictaluri (strain 93-146) protein is Nicotinate phosphoribosyltransferase.